A 273-amino-acid chain; its full sequence is Glutamate racemase (273 aa).

Substrate is bound by residues 19–20 and 51–52; these read DS and YG. The active-site Proton donor/acceptor is C83. 84–85 is a binding site for substrate; sequence NT. C198 functions as the Proton donor/acceptor in the catalytic mechanism. Residue 199 to 200 coordinates substrate; it reads TH.

This sequence belongs to the aspartate/glutamate racemases family.

The catalysed reaction is L-glutamate = D-glutamate. It functions in the pathway cell wall biogenesis; peptidoglycan biosynthesis. Its function is as follows. Provides the (R)-glutamate required for cell wall biosynthesis. In Agrobacterium fabrum (strain C58 / ATCC 33970) (Agrobacterium tumefaciens (strain C58)), this protein is Glutamate racemase.